The primary structure comprises 299 residues: Methionyl-tRNA formyltransferase (299 aa).

109–112 provides a ligand contact to (6S)-5,6,7,8-tetrahydrofolate; the sequence is SLLP.

Belongs to the Fmt family.

It catalyses the reaction L-methionyl-tRNA(fMet) + (6R)-10-formyltetrahydrofolate = N-formyl-L-methionyl-tRNA(fMet) + (6S)-5,6,7,8-tetrahydrofolate + H(+). Its function is as follows. Attaches a formyl group to the free amino group of methionyl-tRNA(fMet). The formyl group appears to play a dual role in the initiator identity of N-formylmethionyl-tRNA by promoting its recognition by IF2 and preventing the misappropriation of this tRNA by the elongation apparatus. This chain is Methionyl-tRNA formyltransferase, found in Wolbachia pipientis subsp. Culex pipiens (strain wPip).